Reading from the N-terminus, the 264-residue chain is ATP synthase subunit a (264 aa).

7 helical membrane passes run 30-50 (WNID…WLFY), 90-110 (IAPL…MDMI), 111-131 (PVDW…KVVP), 134-154 (DVNI…YYSI), 177-197 (IPVN…SLAL), 208-228 (LIFI…ALGV), and 235-255 (LIFH…LTIV).

The protein belongs to the ATPase A chain family. In terms of assembly, F-type ATPases have 2 components, CF(1) - the catalytic core - and CF(0) - the membrane proton channel. CF(1) has five subunits: alpha(3), beta(3), gamma(1), delta(1), epsilon(1). CF(0) has three main subunits: a(1), b(2) and c(9-12). The alpha and beta chains form an alternating ring which encloses part of the gamma chain. CF(1) is attached to CF(0) by a central stalk formed by the gamma and epsilon chains, while a peripheral stalk is formed by the delta and b chains.

It is found in the cell inner membrane. In terms of biological role, key component of the proton channel; it plays a direct role in the translocation of protons across the membrane. This is ATP synthase subunit a from Shewanella frigidimarina (strain NCIMB 400).